We begin with the raw amino-acid sequence, 241 residues long: Probable xyloglucan-specific endo-beta-1,4-glucanase A (241 aa).

The N-terminal stretch at 1–15 is a signal peptide; sequence MKVLALSALLSLASA. N-linked (GlcNAc...) asparagine glycosylation is present at N47.

It belongs to the glycosyl hydrolase 12 (cellulase H) family.

It localises to the secreted. It catalyses the reaction xyloglucan + H2O = xyloglucan oligosaccharides.. Its function is as follows. Catalyzes endohydrolysis of 1,4-beta-D-glucosidic linkages in xyloglucan with retention of the beta-configuration of the glycosyl residues. Specific for xyloglucan and does not hydrolyze other cell wall components. The protein is Probable xyloglucan-specific endo-beta-1,4-glucanase A (xgeA) of Aspergillus niger (strain ATCC MYA-4892 / CBS 513.88 / FGSC A1513).